Consider the following 140-residue polypeptide: Calcitonin (140 aa).

Positions 1-25 (MGFWKFSPFLPLSILVLYQVGIIQA) are cleaved as a signal peptide. The propeptide occupies 26 to 81 (APFRSALESLPDPAVLPEEESRLLLAALVKDYVQMKVRALEQEQETGGASLDSPRA). Residues cysteine 84 and cysteine 90 are joined by a disulfide bond. Position 115 is a proline amide (proline 115). A propeptide spanning residues 120-140 (VMARGLERDHGPHIGTSQDAY) is cleaved from the precursor.

This sequence belongs to the calcitonin family.

It is found in the secreted. Its function is as follows. Calcitonin is a peptide hormone that causes a rapid but short-lived drop in the level of calcium and phosphate in blood by promoting the incorporation of those ions in the bones. Calcitonin function is mediated by the calcitonin receptor/CALCR and the CALCR-RAMP2 (AMYR2) receptor complex. In Equus caballus (Horse), this protein is Calcitonin (CALCA).